We begin with the raw amino-acid sequence, 839 residues long: Small conductance calcium-activated potassium channel protein 2 (839 aa).

4 disordered regions span residues 1–33 (MPIVLVRPTNRTRRLDSTGAGMGPSSHQQQESP), 64–115 (QRGF…QQPG), 195–258 (ALRQ…RRES), and 280–375 (SNLS…KKNQ). Composition is skewed to low complexity over residues 198 to 212 (QQYAQQPASASQYHQ) and 219 to 235 (ATSPTGSLGSLGSGPPL). The span at 236 to 253 (SHHHHHPHPAHHQHHQPQ) shows a compositional bias: basic residues. Over residues 313–326 (SSPSAAAAASSSAP) the composition is skewed to low complexity. Over residues 345–363 (GTGGGGSTGGGGGGSGHGS) the composition is skewed to gly residues. Residues 398 to 418 (ALIFGMFGIVVMVIETELSWG) traverse the membrane as a helical segment. A Phosphotyrosine modification is found at Tyr-420. The chain crosses the membrane as a helical span at residues 428–448 (LALKCLISLSTIILLGLIIVY). The chain crosses the membrane as a helical span at residues 474–494 (IFFICLEILVCAIHPIPGNYT). The helical transmembrane segment at 516-536 (IILSIPMFLRLYLIARVMLLH) threads the bilayer. A helical membrane pass occupies residues 565-585 (LMTICPGTVLLVFSISLWIIA). An intramembrane region (pore-forming) is located at residues 605–625 (FLGAMWLISITFLSIGYGDMV). A helical membrane pass occupies residues 634–654 (VCLLTGIMGAGCTALVVAVVA). A calmodulin-binding region spans residues 672–748 (DTQLTKRVKN…LVDLAKTQNI (77 aa)). Residues 810 to 819 (HVSYNAERSR) are compositionally biased toward basic and acidic residues. The tract at residues 810–839 (HVSYNAERSRSSSRRRRSSSTAPPTSSESS) is disordered. Residues 828-839 (SSTAPPTSSESS) show a composition bias toward low complexity.

This sequence belongs to the potassium channel KCNN family. KCa2.2/KCNN2 subfamily. In terms of assembly, homodimer. Heteromultimer with KCNN1 and KCNN3. The complex is composed of 4 channel subunits each of which binds to a calmodulin subunit which regulates the channel activity through calcium-binding. Interacts (via N-terminal domain) with MPP2. As to expression, expressed in atrial and ventricular myocytes with higher levels in atrial myocytes (at protein level). Highly expressed in brain, liver and colon with low levels in kidney and testis. In colon, detected in smooth muscle cells.

It localises to the membrane. The protein localises to the cytoplasm. It is found in the myofibril. The protein resides in the sarcomere. Its subcellular location is the z line. The catalysed reaction is K(+)(in) = K(+)(out). Inhibited by bee venom neurotoxin apamin. Inhibited by UCL 1684 and tetraethylammonium (TEA). In terms of biological role, small conductance calcium-activated potassium channel that mediates the voltage-independent transmembrane transfer of potassium across the cell membrane through a constitutive interaction with calmodulin which binds the intracellular calcium allowing its opening. The current is characterized by a voltage-independent activation, an intracellular calcium concentration increase-dependent activation and a single-channel conductance of about 3 picosiemens. Also presents an inwardly rectifying current, thus reducing its already small outward conductance of potassium ions, which is particularly the case when the membrane potential displays positive values, above + 20 mV. The inward rectification could be due to a blockade of the outward current by intracellular divalent cations such as calcium and magnesium and could also be due to an intrinsic property of the channel pore, independent of intracellular divalent ions. There are three positively charged amino acids in the S6 transmembrane domain, close to the pore, that collectively control the conductance and rectification through an electrostatic mechanism. Additionally, electrostatic contributions from these residues also play an important role in determining the intrinsic open probability of the channel in the absence of calcium, affecting the apparent calcium affinity for activation. Forms an heteromeric complex with calmodulin, which is constitutively associated in a calcium-independent manner. Channel opening is triggered when calcium binds the calmodulin resulting in a rotary movement leading to the formation of the dimeric complex to open the gate. Plays a role in the repolarization phase of cardiac action potential. The sequence is that of Small conductance calcium-activated potassium channel protein 2 from Mus musculus (Mouse).